A 298-amino-acid polypeptide reads, in one-letter code: Methylsterol monooxygenase 1-1 (298 aa).

3 helical membrane passes run 42 to 62 (ILFL…VELA), 96 to 116 (FILV…MIEI), and 118 to 138 (SGLP…YFLI). The Fatty acid hydroxylase domain maps to 132–267 (LVVYFLIEDY…FTYCDYIYGT (136 aa)). The Histidine box-1 signature appears at 147–151 (HRFFH). The Histidine box-2 motif lies at 160-164 (HRVHH). A helical transmembrane segment spans residues 189–209 (TFMGPAIAPGHMITFWLWIAL). The Histidine box-3 motif lies at 239-245 (YHDYHHY).

The protein belongs to the sterol desaturase family. Interacts with ACBP1. Fe cation serves as cofactor. As to expression, expressed in rosettes, stems, roots, floral buds, flowers and siliques.

It is found in the endoplasmic reticulum membrane. It carries out the reaction 4,4-dimethyl-5alpha-cholest-7-en-3beta-ol + 6 Fe(II)-[cytochrome b5] + 3 O2 + 5 H(+) = 4alpha-carboxy-4beta-methyl-5alpha-cholest-7-ene-3beta-ol + 6 Fe(III)-[cytochrome b5] + 4 H2O. It catalyses the reaction 24-methylenecycloartanol + 6 Fe(II)-[cytochrome b5] + 3 O2 + 5 H(+) = 4alpha-carboxy-4beta,14alpha-dimethyl-9beta,19-cyclo-5alpha-ergost-24(24(1))-en-3beta-ol + 6 Fe(III)-[cytochrome b5] + 4 H2O. In terms of biological role, non-heme iron oxygenase involved in sterols biosynthesis by catalyzing the removal of the first methyl group at the C-4 position. 4,4-dimethyl-9-beta,19-cyclopropylsterols such as 24-methylenecycloartanol are the preferred substrates. Acts as a rate-limiting enzyme in the sterol pathway via interaction with ACBP1; sterols serve as lipid modulators for gene expression of homeodomain-leucine zipper IV transcription factors. Together with SMO1-2, involved in the maintenance of sterol composition to balance auxin and cytokinin activities during embryogenesis. This chain is Methylsterol monooxygenase 1-1, found in Arabidopsis thaliana (Mouse-ear cress).